The sequence spans 443 residues: EP1-like glycoprotein 4 (443 aa).

Positions 1-22 are cleaved as a signal peptide; the sequence is MEFSTTLALFFTLSIFLVGAQA. Positions 29 to 159 constitute a Bulb-type lectin domain; that stretch reads QFRVVNEGGY…NGKFVWQSFD (131 aa). N-linked (GlcNAc...) asparagine glycans are attached at residues asparagine 66, asparagine 102, asparagine 258, and asparagine 269. The stretch at 254-296 is one WD repeat; it reads GSQFNVSTFLSRPKHNATLSFLRLESDGNIRVWSYSTLATSTA. The region spanning 356–433 is the PAN domain; the sequence is CDPKTFHYFK…TSLVAYVKAP (78 aa). 2 disulfides stabilise this stretch: cysteine 387–cysteine 409 and cysteine 391–cysteine 397. N-linked (GlcNAc...) asparagine glycosylation is present at asparagine 434.

It localises to the secreted. The protein localises to the cell wall. The sequence is that of EP1-like glycoprotein 4 from Arabidopsis thaliana (Mouse-ear cress).